The primary structure comprises 185 residues: Peptidyl-tRNA hydrolase (185 aa).

Tyr14 lines the tRNA pocket. His19 functions as the Proton acceptor in the catalytic mechanism. TRNA contacts are provided by Tyr64, Asn66, and Asn112.

The protein belongs to the PTH family. In terms of assembly, monomer.

It localises to the cytoplasm. It carries out the reaction an N-acyl-L-alpha-aminoacyl-tRNA + H2O = an N-acyl-L-amino acid + a tRNA + H(+). In terms of biological role, hydrolyzes ribosome-free peptidyl-tRNAs (with 1 or more amino acids incorporated), which drop off the ribosome during protein synthesis, or as a result of ribosome stalling. Functionally, catalyzes the release of premature peptidyl moieties from peptidyl-tRNA molecules trapped in stalled 50S ribosomal subunits, and thus maintains levels of free tRNAs and 50S ribosomes. This chain is Peptidyl-tRNA hydrolase, found in Shouchella clausii (strain KSM-K16) (Alkalihalobacillus clausii).